The chain runs to 694 residues: Long-chain-fatty-acid--CoA ligase 4 (694 aa).

The disordered stretch occupies residues 1–21 (MTEQYSVAVGEAANEHETAPR). An ATP-binding site is contributed by 269 to 280 (YTSGSTGTPKGV). The FACS motif lies at 527–576 (DGWFRTGDIAEWTPKGQVKIIDRKKNLVKTLNGEYIALEKLESIYRSNPY).

It belongs to the ATP-dependent AMP-binding enzyme family. In terms of assembly, interacts with FAT1. It depends on Mg(2+) as a cofactor.

The protein resides in the lipid droplet. It catalyses the reaction a long-chain fatty acid + ATP + CoA = a long-chain fatty acyl-CoA + AMP + diphosphate. The enzyme catalyses (9Z)-hexadecenoate + ATP + CoA = (9Z)-hexadecenoyl-CoA + AMP + diphosphate. The catalysed reaction is (9Z)-octadecenoate + ATP + CoA = (9Z)-octadecenoyl-CoA + AMP + diphosphate. It carries out the reaction hexadecanoate + ATP + CoA = hexadecanoyl-CoA + AMP + diphosphate. In terms of biological role, activates long-chain fatty acids (LCFA) by esterification of the fatty acids into metabolically active CoA-thioesters for subsequent degradation or incorporation into phospholipids. Also facilitates the transport of LCFAs into the cell, either by active transport or by decreasing the intracellular LCFA concentration. Contributes, with FAA1, to the activation of imported myristate. Also involved in long-chain base (LCB) uptake. In contrast ot LCFA uptake, LCB uptake does not require ATP, suggesting that the enzyme is directly involved in LCB uptake. Involved in the sphingolipid-to-glycerolipid metabolic pathway, converting the sphingolipid metabolite hexadecenoic acid to hexadecenoyl-CoA, which is then further converted to glycerolipids. The polypeptide is Long-chain-fatty-acid--CoA ligase 4 (FAA4) (Saccharomyces cerevisiae (strain ATCC 204508 / S288c) (Baker's yeast)).